Consider the following 422-residue polypeptide: Protein king tubby 2 (422 aa).

The interval 49–169 (PSNPDQIISS…ASGHNDAEGD (121 aa)) is disordered. The span at 57–81 (SSGSPTTVTATGTTTGSVTTTPTSP) shows a compositional bias: low complexity.

This sequence belongs to the TUB family.

The protein localises to the cytoplasm. The protein resides in the nucleus. The protein is Protein king tubby 2 (king-tubby2) of Culex quinquefasciatus (Southern house mosquito).